The following is a 354-amino-acid chain: MITIDGSMGEGGGQILRTALALSIITGKPFRIINIRARRSNPGLQPQHLASVMAAARISNAKVDGAYKGSLSLTFEPGDVKCGDYSIDIGTAGSISLVLQTLLPVLAVVNCGEVTLDITGGTDVPKAPPIDYVRFVLAHNLSLMGVGIKVELIRRGHYPRGGGKVKVTVKPAGRLKPINITELGELKGIWGLSHAVRLPSHVAVRQAKAAEDYLSKLGLKPSISLEYYEQGKDPHLGPGSGITLWAESTNGQRIGADSLGERGKPAEDVGREAAEALAAVINAGAAFDDHMGDMLIPFLALAEGRSEYTVVNLTSHLSTNISIVKLFLNANIETMNYNKKVKVTINPITAPRKP.

Residues Gln100 and 290–293 contribute to the ATP site; that span reads HMGD. Catalysis depends on His316, which acts as the Tele-AMP-histidine intermediate.

Belongs to the RNA 3'-terminal cyclase family. Type 1 subfamily.

It is found in the cytoplasm. It carries out the reaction a 3'-end 3'-phospho-ribonucleotide-RNA + ATP = a 3'-end 2',3'-cyclophospho-ribonucleotide-RNA + AMP + diphosphate. Functionally, catalyzes the conversion of 3'-phosphate to a 2',3'-cyclic phosphodiester at the end of RNA. The mechanism of action of the enzyme occurs in 3 steps: (A) adenylation of the enzyme by ATP; (B) transfer of adenylate to an RNA-N3'P to produce RNA-N3'PP5'A; (C) and attack of the adjacent 2'-hydroxyl on the 3'-phosphorus in the diester linkage to produce the cyclic end product. The biological role of this enzyme is unknown but it is likely to function in some aspects of cellular RNA processing. This Caldivirga maquilingensis (strain ATCC 700844 / DSM 13496 / JCM 10307 / IC-167) protein is RNA 3'-terminal phosphate cyclase.